Reading from the N-terminus, the 421-residue chain is Imidazolonepropionase (421 aa).

His-81 and His-83 together coordinate Fe(3+). 2 residues coordinate Zn(2+): His-81 and His-83. 4-imidazolone-5-propanoate-binding residues include Arg-90, Tyr-153, and His-186. Tyr-153 contributes to the N-formimidoyl-L-glutamate binding site. His-251 provides a ligand contact to Fe(3+). Zn(2+) is bound at residue His-251. A 4-imidazolone-5-propanoate-binding site is contributed by Glu-254. Asp-326 is a binding site for Fe(3+). Zn(2+) is bound at residue Asp-326. The N-formimidoyl-L-glutamate site is built by Asn-328 and Gly-330. Ser-331 contributes to the 4-imidazolone-5-propanoate binding site.

It belongs to the metallo-dependent hydrolases superfamily. HutI family. Requires Zn(2+) as cofactor. The cofactor is Fe(3+).

It is found in the cytoplasm. The catalysed reaction is 4-imidazolone-5-propanoate + H2O = N-formimidoyl-L-glutamate. The protein operates within amino-acid degradation; L-histidine degradation into L-glutamate; N-formimidoyl-L-glutamate from L-histidine: step 3/3. In terms of biological role, catalyzes the hydrolytic cleavage of the carbon-nitrogen bond in imidazolone-5-propanoate to yield N-formimidoyl-L-glutamate. It is the third step in the universal histidine degradation pathway. The protein is Imidazolonepropionase of Streptococcus pyogenes serotype M18 (strain MGAS8232).